The following is a 258-amino-acid chain: Regulatory protein RecX (258 aa).

It belongs to the RecX family.

It localises to the cytoplasm. Its function is as follows. Modulates RecA activity. In Streptococcus pyogenes serotype M12 (strain MGAS2096), this protein is Regulatory protein RecX.